Consider the following 248-residue polypeptide: Functional amyloid sbunit FapE (248 aa).

Positions 1–20 (MNTSRWLTALCLAASMPAYA) are cleaved as a signal peptide.

This sequence belongs to the FapE family. A minor component of purified amyloid fibrils. Fibrils are resistant to boiling in 2% (weight/vol) SDS and require &gt;90% (vol/vol) formic acid to dissolve.

It is found in the fimbrium. The protein localises to the secreted. In terms of biological role, a minor component of the functional amyloid in this bacterium. Upon overexpression of the endogenous six-gene locus (fapA-fapF) in situ, cells form large clumps during liquid growth, make large amounts of biofilm and produce amyloid fibrils. Expression of the 6 gene operon in E.coli strain BL21(DE3) induces flocculation and biofilm formation with copious extracellular fibrils. The protein is Functional amyloid sbunit FapE of Pseudomonas fluorescens.